The chain runs to 1846 residues: Brefeldin A-inhibited guanine nucleotide-exchange protein 1 (1846 aa).

The tract at residues 2-224 (YEGKKTKNMF…QEAKQMERER (223 aa)) is DCB; DCB:DCB domain and DCB:HUS domain interaction. Serine 52 carries the post-translational modification Phosphoserine. 3 disordered regions span residues 217-248 (AKQM…HLRY), 264-302 (DLDP…DQAT), and 347-410 (VSAS…SPGA). The span at 267-277 (PQTHDVDKSLQ) shows a compositional bias: basic and acidic residues. Phosphoserine occurs at positions 286, 289, 290, 394, and 407. A compositionally biased stretch (polar residues) spans 391 to 406 (SVSSNDTQESGNSSGP). The tract at residues 554–574 (ADAQSVVDIYVNYDCDLNAAN) is HUS; DCB:HUS domain interaction. The interval 631–684 (PNSQTTLGQEKPSEQEISEIKHPETINRYGSLNSLESTSSSGIGSYSTQMSGTD) is disordered. Positions 641-655 (KPSEQEISEIKHPET) are enriched in basic and acidic residues. The segment covering 661–681 (SLNSLESTSSSGIGSYSTQMS) has biased composition (low complexity). Residues 688–877 (QFEVLKQQKE…SAIYNEIAGK (190 aa)) enclose the SEC7 domain. A Nuclear localization signal (NLS) motif is present at residues 708-712 (KKPKR). A phosphoserine mark is found at serine 1076, serine 1563, and serine 1566. Residues 1571 to 1600 (DSAQPRSSDNRQQAPLVSVSPASEEVSKGR) form a disordered region. Over residues 1574–1585 (QPRSSDNRQQAP) the composition is skewed to polar residues.

In terms of assembly, homodimer. Interacts with ARFGEF2/BIG2; both proteins are probably part of the same or very similar macromolecular complexes. Interacts with FKBP2. Interacts with MYO9B. Interacts with PRKAR1A and PRKAR2A. Interacts with PPP1CC. Interacts with NCL, FBL, NUP62 and U3 small nucleolar RNA. Interacts with DPY30. Interacts with PDE3A. Interacts with KANK1. Interacts with TBC1D22A and TBC1D22B. In terms of processing, phosphorylated. In vitro phosphorylated by PKA reducing its GEF activity and dephosphorylated by phosphatase PP1.

It is found in the cytoplasm. The protein localises to the perinuclear region. It localises to the golgi apparatus. Its subcellular location is the trans-Golgi network. The protein resides in the nucleus. It is found in the nucleolus. The protein localises to the nucleus matrix. It localises to the membrane. With respect to regulation, inhibited by brefeldin A. Promotes guanine-nucleotide exchange on ARF1 and ARF3. Promotes the activation of ARF1/ARF3 through replacement of GDP with GTP. Involved in vesicular trafficking. Required for the maintenance of Golgi structure; the function may be independent of its GEF activity. Required for the maturation of integrin beta-1 in the Golgi. Involved in the establishment and persistence of cell polarity during directed cell movement in wound healing. Proposed to act as A kinase-anchoring protein (AKAP) and may mediate crosstalk between Arf and PKA pathways. Inhibits GAP activity of MYO9B probably through competitive RhoA binding. The function in the nucleus remains to be determined. The chain is Brefeldin A-inhibited guanine nucleotide-exchange protein 1 (Arfgef1) from Rattus norvegicus (Rat).